A 225-amino-acid chain; its full sequence is 2-C-methyl-D-erythritol 4-phosphate cytidylyltransferase (225 aa).

The protein belongs to the IspD/TarI cytidylyltransferase family. IspD subfamily.

It carries out the reaction 2-C-methyl-D-erythritol 4-phosphate + CTP + H(+) = 4-CDP-2-C-methyl-D-erythritol + diphosphate. It functions in the pathway isoprenoid biosynthesis; isopentenyl diphosphate biosynthesis via DXP pathway; isopentenyl diphosphate from 1-deoxy-D-xylulose 5-phosphate: step 2/6. Its function is as follows. Catalyzes the formation of 4-diphosphocytidyl-2-C-methyl-D-erythritol from CTP and 2-C-methyl-D-erythritol 4-phosphate (MEP). The polypeptide is 2-C-methyl-D-erythritol 4-phosphate cytidylyltransferase (Chromobacterium violaceum (strain ATCC 12472 / DSM 30191 / JCM 1249 / CCUG 213 / NBRC 12614 / NCIMB 9131 / NCTC 9757 / MK)).